A 426-amino-acid polypeptide reads, in one-letter code: Enolase (426 aa).

Gln163 is a (2R)-2-phosphoglycerate binding site. Glu205 acts as the Proton donor in catalysis. Mg(2+) is bound by residues Asp242, Glu285, and Asp312. (2R)-2-phosphoglycerate is bound by residues Lys337, Arg366, Ser367, and Lys388. Lys337 acts as the Proton acceptor in catalysis.

The protein belongs to the enolase family. The cofactor is Mg(2+).

The protein localises to the cytoplasm. Its subcellular location is the secreted. The protein resides in the cell surface. The catalysed reaction is (2R)-2-phosphoglycerate = phosphoenolpyruvate + H2O. The protein operates within carbohydrate degradation; glycolysis; pyruvate from D-glyceraldehyde 3-phosphate: step 4/5. Its function is as follows. Catalyzes the reversible conversion of 2-phosphoglycerate (2-PG) into phosphoenolpyruvate (PEP). It is essential for the degradation of carbohydrates via glycolysis. This is Enolase from Gluconacetobacter diazotrophicus (strain ATCC 49037 / DSM 5601 / CCUG 37298 / CIP 103539 / LMG 7603 / PAl5).